The chain runs to 300 residues: Ribonuclease Z (300 aa).

Positions 63, 65, 67, 68, 140, 207, and 265 each coordinate Zn(2+). The active-site Proton acceptor is D67.

The protein belongs to the RNase Z family. As to quaternary structure, homodimer. The cofactor is Zn(2+).

The catalysed reaction is Endonucleolytic cleavage of RNA, removing extra 3' nucleotides from tRNA precursor, generating 3' termini of tRNAs. A 3'-hydroxy group is left at the tRNA terminus and a 5'-phosphoryl group is left at the trailer molecule.. Its function is as follows. Zinc phosphodiesterase, which displays some tRNA 3'-processing endonuclease activity. Probably involved in tRNA maturation, by removing a 3'-trailer from precursor tRNA. The chain is Ribonuclease Z from Ignicoccus hospitalis (strain KIN4/I / DSM 18386 / JCM 14125).